The primary structure comprises 176 residues: Inorganic pyrophosphatase (176 aa).

The substrate site is built by lysine 31, arginine 45, and tyrosine 57. Residues aspartate 67, aspartate 72, and aspartate 104 each coordinate Mg(2+). Residue tyrosine 142 coordinates substrate.

The protein belongs to the PPase family. As to quaternary structure, homohexamer. Mg(2+) serves as cofactor.

The protein resides in the cytoplasm. The catalysed reaction is diphosphate + H2O = 2 phosphate + H(+). In terms of biological role, catalyzes the hydrolysis of inorganic pyrophosphate (PPi) forming two phosphate ions. In Haemophilus influenzae (strain ATCC 51907 / DSM 11121 / KW20 / Rd), this protein is Inorganic pyrophosphatase.